A 524-amino-acid chain; its full sequence is MTTTTQSEQDRVIIFDTTLRDGEQCPGATMTFEEKLNVARMLDDMGVDVIEAGYPFASDGDFEAVHEIAKRSKNSVICGLSRAAHKDIDRCAEAIKPAERGRIHTFLSTSPVHMKYKLQMEAAQVYEMVISSVTRARNHTDDVEWSAEDATRTEFDFLCRCIEAAIKAGATTINLPDTVGYAVPEEYRELFRKVRETVPNSDKARFSVHCHNDLGMAVANSMAGVAGGARQIECTINGIGERAGNAALEEVVMAMRVRQDRLPYWNRIETTMLTHASKTVSAATSFPVQYNKAIVGRNAFAHESGIHQDGMIKNAQTYEIMTPETVGVKGTSLVMGKHSGRAGLIHKMEELGYKLSRNQIEDVFVRFKALADRKKDVYDEDIEALVDEQLLHGQDQIKLMSLTVIAGTHGPQRATMKLDVDGQIRIEEAEGNGPVDAVFNCIKALVPHDAKLELYQVHAVTEGTDAQAEVSVRLSHEGRSMTARAADPDTLVASAKAYLGALNKIVAKRQRSVREDAPAVAVAG.

Positions 12 to 274 (VIIFDTTLRD…WNRIETTMLT (263 aa)) constitute a Pyruvate carboxyltransferase domain. 4 residues coordinate Mn(2+): D21, H209, H211, and N245. Positions 398–524 (KLMSLTVIAG…EDAPAVAVAG (127 aa)) are regulatory domain.

The protein belongs to the alpha-IPM synthase/homocitrate synthase family. LeuA type 1 subfamily. In terms of assembly, homodimer. Mn(2+) is required as a cofactor.

Its subcellular location is the cytoplasm. The enzyme catalyses 3-methyl-2-oxobutanoate + acetyl-CoA + H2O = (2S)-2-isopropylmalate + CoA + H(+). The protein operates within amino-acid biosynthesis; L-leucine biosynthesis; L-leucine from 3-methyl-2-oxobutanoate: step 1/4. Functionally, catalyzes the condensation of the acetyl group of acetyl-CoA with 3-methyl-2-oxobutanoate (2-ketoisovalerate) to form 3-carboxy-3-hydroxy-4-methylpentanoate (2-isopropylmalate). This is 2-isopropylmalate synthase from Rhodopseudomonas palustris (strain ATCC BAA-98 / CGA009).